The chain runs to 764 residues: MSAARQPSPTVRDKAAPEPAAPAAPKGARAPRARRAAPPHGVRPAPALAAEERARLLEGRHHDPHAVLGARTQRGGVAFRVLRPYAKAVTVVAKGLRTELVDEGDGLFSGLLPLTGVPDYRLLVTYDSDEIEVHDPYRFLPALGELDLHLIGEGRHEELWTALGSQPMEHQGVAGTRFTVWAPNALGVRVTGDFSYWDAVAYPMRSLGASGVWELFLPGVAEGALYKYEITRPDGGRTLRADPMARYAEVPPANASIVTASRYEWQDAEWMARRGALAPHQAPMSVYELHLASWRPGLSYRQLAEQLPAYVKELGFTHVELMPVAEHPFGGSWGYQVTGFYAPTSRMGTPDDFRFLVDALHRAGIGVIVDWVPAHFPRDDWALAEFDGRPLYEHQDPRRAAHPDWGTLEFDYGRKEVRNFLVANAVYWCQEFHVDGLRADAVASMLYLDYSRDEGDWSPNAHGGREDLDAVALLQEMNATVYRRFPGVVTIAEESTAWDGVTRPTDSGGLGFGLKWNMGWMHDTLRYVSKEPVHRKYHHHDMTFGMVYAFSENFVLPISHDEVVHGKRSLVSKMPGDWWQQRATHRAYLGFMWAHPGKQLLFMGQEFAQGSEWSETYGPDWWVLDSSYPAAGDHLGVRSLVRDLNRTYTASPALWERDSVPEGFAWVEADAADDNVFAFLRFARDGSPLLCVSNFSPVVRHGYRIGVPQEVGQWREVLNTDLEPYGGSGVHHARALRPEPVPAQGRAVSLRMTLPPMATVWLRP.

The interval 1–46 is disordered; that stretch reads MSAARQPSPTVRDKAAPEPAAPAAPKGARAPRARRAAPPHGVRPAP. The segment covering 17 to 28 has biased composition (low complexity); sequence PEPAAPAAPKGA. Residue Asp-440 is the Nucleophile of the active site. Glu-493 (proton donor) is an active-site residue.

The protein belongs to the glycosyl hydrolase 13 family. GlgB subfamily. Monomer.

It catalyses the reaction Transfers a segment of a (1-&gt;4)-alpha-D-glucan chain to a primary hydroxy group in a similar glucan chain.. It functions in the pathway glycan biosynthesis; glycogen biosynthesis. Its function is as follows. Catalyzes the formation of the alpha-1,6-glucosidic linkages in glycogen by scission of a 1,4-alpha-linked oligosaccharide from growing alpha-1,4-glucan chains and the subsequent attachment of the oligosaccharide to the alpha-1,6 position. This Kitasatospora aureofaciens (Streptomyces aureofaciens) protein is 1,4-alpha-glucan branching enzyme GlgB (glgB).